Reading from the N-terminus, the 104-residue chain is MERPTPRVTKDMLPECSGKTVRIVGKANQVEGETAKVDSNGSFDMHLTVDNTLEPNHFYEFVVSVKPDSSVQLLTCVDFGTDIDMEVYQKLVLFSHKYNSLFFE.

The protein belongs to the replication factor A protein 3 family. As to quaternary structure, component of the heterotrimeric canonical replication protein A complex (RPA).

It localises to the nucleus. As part of the replication protein A (RPA/RP-A), a single-stranded DNA-binding heterotrimeric complex, may play an essential role in DNA replication, recombination and repair. Binds and stabilizes single-stranded DNA intermediates, preventing complementary DNA reannealing and recruiting different proteins involved in DNA metabolism. In Schizosaccharomyces pombe (strain 972 / ATCC 24843) (Fission yeast), this protein is Replication factor A protein 3 (ssb3).